The following is a 165-amino-acid chain: 6,7-dimethyl-8-ribityllumazine synthase (165 aa).

5-amino-6-(D-ribitylamino)uracil is bound by residues F22, 56 to 58, and 80 to 82; these read SME and AVI. 85 to 86 serves as a coordination point for (2S)-2-hydroxy-3-oxobutyl phosphate; sequence ET. The Proton donor role is filled by H88. Residue F113 coordinates 5-amino-6-(D-ribitylamino)uracil. Position 127 (R127) interacts with (2S)-2-hydroxy-3-oxobutyl phosphate.

It belongs to the DMRL synthase family.

The enzyme catalyses (2S)-2-hydroxy-3-oxobutyl phosphate + 5-amino-6-(D-ribitylamino)uracil = 6,7-dimethyl-8-(1-D-ribityl)lumazine + phosphate + 2 H2O + H(+). The protein operates within cofactor biosynthesis; riboflavin biosynthesis; riboflavin from 2-hydroxy-3-oxobutyl phosphate and 5-amino-6-(D-ribitylamino)uracil: step 1/2. In terms of biological role, catalyzes the formation of 6,7-dimethyl-8-ribityllumazine by condensation of 5-amino-6-(D-ribitylamino)uracil with 3,4-dihydroxy-2-butanone 4-phosphate. This is the penultimate step in the biosynthesis of riboflavin. This chain is 6,7-dimethyl-8-ribityllumazine synthase, found in Thermotoga sp. (strain RQ2).